The following is a 127-amino-acid chain: Large ribosomal subunit protein bL17 (127 aa).

Belongs to the bacterial ribosomal protein bL17 family. Part of the 50S ribosomal subunit. Contacts protein L32.

This chain is Large ribosomal subunit protein bL17, found in Xanthomonas euvesicatoria pv. vesicatoria (strain 85-10) (Xanthomonas campestris pv. vesicatoria).